An 89-amino-acid polypeptide reads, in one-letter code: Small ribosomal subunit protein uS15 (89 aa).

This sequence belongs to the universal ribosomal protein uS15 family. As to quaternary structure, part of the 30S ribosomal subunit. Forms a bridge to the 50S subunit in the 70S ribosome, contacting the 23S rRNA.

In terms of biological role, one of the primary rRNA binding proteins, it binds directly to 16S rRNA where it helps nucleate assembly of the platform of the 30S subunit by binding and bridging several RNA helices of the 16S rRNA. Functionally, forms an intersubunit bridge (bridge B4) with the 23S rRNA of the 50S subunit in the ribosome. This is Small ribosomal subunit protein uS15 from Mycobacterium bovis (strain ATCC BAA-935 / AF2122/97).